The primary structure comprises 50 residues: Insulin (50 aa).

Intrachain disulfides connect Cys7-Cys36, Cys19-Cys49, and Cys35-Cys40.

It belongs to the insulin family. Heterodimer of a B chain and an A chain linked by two disulfide bonds.

It is found in the secreted. Insulin decreases blood glucose concentration. It increases cell permeability to monosaccharides, amino acids and fatty acids. It accelerates glycolysis, the pentose phosphate cycle, and glycogen synthesis in liver. The protein is Insulin (INS) of Proechimys guairae (Guaira spiny rat).